A 217-amino-acid chain; its full sequence is 3,4-dihydroxy-2-butanone 4-phosphate synthase (217 aa).

D-ribulose 5-phosphate contacts are provided by residues 37-38 (RE), D42, 150-154 (RRGHT), and E174. E38 lines the Mg(2+) pocket. H153 contacts Mg(2+).

It belongs to the DHBP synthase family. As to quaternary structure, homodimer. Mg(2+) is required as a cofactor. The cofactor is Mn(2+).

The catalysed reaction is D-ribulose 5-phosphate = (2S)-2-hydroxy-3-oxobutyl phosphate + formate + H(+). It functions in the pathway cofactor biosynthesis; riboflavin biosynthesis; 2-hydroxy-3-oxobutyl phosphate from D-ribulose 5-phosphate: step 1/1. In terms of biological role, catalyzes the conversion of D-ribulose 5-phosphate to formate and 3,4-dihydroxy-2-butanone 4-phosphate. This chain is 3,4-dihydroxy-2-butanone 4-phosphate synthase, found in Shewanella putrefaciens (strain CN-32 / ATCC BAA-453).